Consider the following 425-residue polypeptide: Neuromedin-U receptor 1 (425 aa).

At 1–59 (MTPPCLNCSFFPGQLSPNASTGLLSCNDSEFKEHFDLEDLNLTHEDLRLKYLGPQQVKQ) the chain is on the extracellular side. The N-linked (GlcNAc...) asparagine glycan is linked to N41. The helical transmembrane segment at 60–80 (FLPICVTYLLIFVVGTLGNGL) threads the bilayer. The Cytoplasmic portion of the chain corresponds to 81 to 96 (TCTVILRQKAMHTPTN). A helical membrane pass occupies residues 97-117 (FYLFSLAVSDLLVLLVGLPLE). The Extracellular portion of the chain corresponds to 118-137 (LYEMQHNYPFQLGAGGCYFR). The cysteines at positions 134 and 219 are disulfide-linked. Residues 138 to 158 (ILLLETVCLASVLNVTALSVE) traverse the membrane as a helical segment. Topologically, residues 159 to 181 (RYVAVVHPLQAKSVMTRTHVRRM) are cytoplasmic. The chain crosses the membrane as a helical span at residues 182–202 (LGAIWVFAILFSLPNTSLHGL). At 203-235 (SPLYVPCRGPVPDSVTCTLVRPQFFYKLVIQTT) the chain is on the extracellular side. A helical membrane pass occupies residues 236–256 (ILLFFCLPMVTISVLYLLIGL). Over 257-294 (RLRRERILLQEEVKGRISAAARQASHRSIQLRDRERRQ) the chain is Cytoplasmic. Residues 295-315 (VTKMLIALVIVFGTCWVPFHA) traverse the membrane as a helical segment. Topologically, residues 316–331 (DRLMWSMVSHWTDGLR) are extracellular. A helical membrane pass occupies residues 332–352 (LAFQSVHLASGVFLYLGSAAN). Residues 353 to 425 (PVLYNLMSTR…GCEQETDPPE (73 aa)) are Cytoplasmic-facing. Residues 406–425 (DVPLAENRDPGCEQETDPPE) form a disordered region.

Belongs to the G-protein coupled receptor 1 family. In terms of tissue distribution, highly expressed in the small intestine and lung. Low expression in the central nervous system.

The protein resides in the cell membrane. Receptor for the neuromedin-U and neuromedin-S neuropeptides. The sequence is that of Neuromedin-U receptor 1 (Nmur1) from Rattus norvegicus (Rat).